A 506-amino-acid polypeptide reads, in one-letter code: 2,3-bisphosphoglycerate-independent phosphoglycerate mutase (506 aa).

Mn(2+)-binding residues include aspartate 13 and serine 63. Catalysis depends on serine 63, which acts as the Phosphoserine intermediate. Substrate-binding positions include histidine 124, 153-154, arginine 183, arginine 189, 254-257, and lysine 330; these read RD and RADR. Residues aspartate 396, histidine 400, aspartate 437, histidine 438, and histidine 456 each coordinate Mn(2+).

It belongs to the BPG-independent phosphoglycerate mutase family. In terms of assembly, monomer. Mn(2+) is required as a cofactor.

It carries out the reaction (2R)-2-phosphoglycerate = (2R)-3-phosphoglycerate. Its pathway is carbohydrate degradation; glycolysis; pyruvate from D-glyceraldehyde 3-phosphate: step 3/5. Catalyzes the interconversion of 2-phosphoglycerate and 3-phosphoglycerate. The chain is 2,3-bisphosphoglycerate-independent phosphoglycerate mutase from Cereibacter sphaeroides (strain KD131 / KCTC 12085) (Rhodobacter sphaeroides).